We begin with the raw amino-acid sequence, 315 residues long: Acetyl-coenzyme A carboxylase carboxyl transferase subunit alpha (315 aa).

The CoA carboxyltransferase C-terminal domain maps to 38-292 (RLQKKSNELT…KLRLKEDLAE (255 aa)).

Belongs to the AccA family. Acetyl-CoA carboxylase is a heterohexamer composed of biotin carboxyl carrier protein (AccB), biotin carboxylase (AccC) and two subunits each of ACCase subunit alpha (AccA) and ACCase subunit beta (AccD).

The protein resides in the cytoplasm. The catalysed reaction is N(6)-carboxybiotinyl-L-lysyl-[protein] + acetyl-CoA = N(6)-biotinyl-L-lysyl-[protein] + malonyl-CoA. Its pathway is lipid metabolism; malonyl-CoA biosynthesis; malonyl-CoA from acetyl-CoA: step 1/1. Its function is as follows. Component of the acetyl coenzyme A carboxylase (ACC) complex. First, biotin carboxylase catalyzes the carboxylation of biotin on its carrier protein (BCCP) and then the CO(2) group is transferred by the carboxyltransferase to acetyl-CoA to form malonyl-CoA. In Haemophilus influenzae (strain PittEE), this protein is Acetyl-coenzyme A carboxylase carboxyl transferase subunit alpha.